Reading from the N-terminus, the 313-residue chain is 18S rRNA aminocarboxypropyltransferase (313 aa).

Residues 1–30 (MGKGKNKMHEPKNGRPQRGANGHSSRQNHR) are disordered. 4 residues coordinate S-adenosyl-L-methionine: S62, V110, L133, and W148. Basic and acidic residues predominate over residues 215 to 228 (KETQERKSRAKEED). Residues 215-313 (KETQERKSRA…SYDPLGNLIR (99 aa)) are disordered. The span at 237-246 (RRGNGSQSDT) shows a compositional bias: polar residues. Residues 247-257 (SESEENSEQSD) show a composition bias toward acidic residues. S286 and S289 each carry phosphoserine.

Belongs to the TDD superfamily. TSR3 family.

Its subcellular location is the cytoplasm. The protein resides in the nucleus. It carries out the reaction an N(1)-methylpseudouridine in rRNA + S-adenosyl-L-methionine = N(1)-methyl-N(3)-[(3S)-3-amino-3-carboxypropyl]pseudouridine in rRNA + S-methyl-5'-thioadenosine + H(+). The enzyme catalyses N(1)-methylpseudouridine(1191) in yeast 18S rRNA + S-adenosyl-L-methionine = N(1)-methyl-N(3)-[(3S)-3-amino-3-carboxypropyl]pseudouridine(1191) in yeast 18S rRNA + S-methyl-5'-thioadenosine + H(+). Its function is as follows. Aminocarboxypropyltransferase that catalyzes the aminocarboxypropyl transfer on pseudouridine at position 1191 (Psi1191) in 18S rRNA. It constitutes the last step in biosynthesis of the hypermodified N1-methyl-N3-(3-amino-3-carboxypropyl) pseudouridine (m1acp3-Psi) conserved in eukaryotic 18S rRNA. Required for processing 35S pre-rRNA at site D. The protein is 18S rRNA aminocarboxypropyltransferase of Saccharomyces cerevisiae (strain ATCC 204508 / S288c) (Baker's yeast).